Here is a 255-residue protein sequence, read N- to C-terminus: Pyridoxine 5'-phosphate synthase (255 aa).

The 3-amino-2-oxopropyl phosphate site is built by N8 and R19. H44 (proton acceptor) is an active-site residue. 2 residues coordinate 1-deoxy-D-xylulose 5-phosphate: R46 and H51. E74 (proton acceptor) is an active-site residue. T111 provides a ligand contact to 1-deoxy-D-xylulose 5-phosphate. The active-site Proton donor is H202. 3-amino-2-oxopropyl phosphate is bound by residues D203 and G225 to H226.

The protein belongs to the PNP synthase family. As to quaternary structure, homooctamer; tetramer of dimers.

It is found in the cytoplasm. The enzyme catalyses 3-amino-2-oxopropyl phosphate + 1-deoxy-D-xylulose 5-phosphate = pyridoxine 5'-phosphate + phosphate + 2 H2O + H(+). The protein operates within cofactor biosynthesis; pyridoxine 5'-phosphate biosynthesis; pyridoxine 5'-phosphate from D-erythrose 4-phosphate: step 5/5. Its function is as follows. Catalyzes the complicated ring closure reaction between the two acyclic compounds 1-deoxy-D-xylulose-5-phosphate (DXP) and 3-amino-2-oxopropyl phosphate (1-amino-acetone-3-phosphate or AAP) to form pyridoxine 5'-phosphate (PNP) and inorganic phosphate. In Xanthomonas axonopodis pv. citri (strain 306), this protein is Pyridoxine 5'-phosphate synthase.